The sequence spans 386 residues: Succinate--CoA ligase [ADP-forming] subunit beta (386 aa).

The ATP-grasp domain occupies 9-244; it reads KEILRKYGVP…HDEEDPLETR (236 aa). ATP contacts are provided by residues Lys-46, 53–55, Glu-99, Cys-102, and Glu-107; that span reads GRG. Residues Asn-199 and Asp-213 each coordinate Mg(2+). Residues Asn-264 and 321–323 contribute to the substrate site; that span reads GIM.

The protein belongs to the succinate/malate CoA ligase beta subunit family. Heterotetramer of two alpha and two beta subunits. The cofactor is Mg(2+).

The enzyme catalyses succinate + ATP + CoA = succinyl-CoA + ADP + phosphate. The catalysed reaction is GTP + succinate + CoA = succinyl-CoA + GDP + phosphate. The protein operates within carbohydrate metabolism; tricarboxylic acid cycle; succinate from succinyl-CoA (ligase route): step 1/1. Its function is as follows. Succinyl-CoA synthetase functions in the citric acid cycle (TCA), coupling the hydrolysis of succinyl-CoA to the synthesis of either ATP or GTP and thus represents the only step of substrate-level phosphorylation in the TCA. The beta subunit provides nucleotide specificity of the enzyme and binds the substrate succinate, while the binding sites for coenzyme A and phosphate are found in the alpha subunit. In Rickettsia rickettsii (strain Iowa), this protein is Succinate--CoA ligase [ADP-forming] subunit beta.